We begin with the raw amino-acid sequence, 341 residues long: GDT1-like protein 1, chloroplastic (341 aa).

Residues 1–13 (MASVASSTVFASS) show a composition bias toward low complexity. 2 disordered regions span residues 1–41 (MASV…GRSV) and 54–76 (VVTR…GGGR). A chloroplast-targeting transit peptide spans 1 to 57 (MASVASSTVFASSLPHHRATTRAPPTPPRIPRRARLPGRSVVSCLPKRGSEKLVVTR). Transmembrane regions (helical) follow at residues 79 to 99 (PSLD…VLML), 117 to 137 (VVGD…LIFF), 158 to 178 (AIIF…SVVL), 203 to 223 (FLAA…AASG), 246 to 266 (GAGI…VFIA), 286 to 306 (LGVI…AVLG), and 318 to 338 (IVAY…LVEI).

It belongs to the GDT1 family.

It localises to the plastid. The protein localises to the chloroplast membrane. The polypeptide is GDT1-like protein 1, chloroplastic (Oryza sativa subsp. indica (Rice)).